The sequence spans 92 residues: Small ribosomal subunit protein uS19 (92 aa).

Belongs to the universal ribosomal protein uS19 family.

In terms of biological role, protein S19 forms a complex with S13 that binds strongly to the 16S ribosomal RNA. This chain is Small ribosomal subunit protein uS19, found in Streptococcus agalactiae serotype Ia (strain ATCC 27591 / A909 / CDC SS700).